The primary structure comprises 403 residues: Farnesyl pyrophosphate synthase (403 aa).

Residues Asp156 and Asp160 each contribute to the Mg(2+) site. The short motif at 156–160 (DDLAD) is the DDXXD motif element.

It belongs to the FPP/GGPP synthase family. Requires Mg(2+) as cofactor.

The catalysed reaction is isopentenyl diphosphate + (2E)-geranyl diphosphate = (2Z,6E)-farnesyl diphosphate + diphosphate. Its pathway is pheromone biosynthesis. Functionally, farnesyl pyrophosphate synthase involved in pheromone biosynthesis by catalyzing the formation of (2Z,6E)-farnesyl diphosphate. In Nezara viridula (Southern green stink bug), this protein is Farnesyl pyrophosphate synthase.